The following is a 787-amino-acid chain: Integrin beta-3 (787 aa).

The N-terminal stretch at 1–25 (MRAQWPGQLWAALLALGALAGVVVG) is a signal peptide. Residues 26-717 (ESNICTTRGV…EEPECPKGPD (692 aa)) lie on the Extracellular side of the membrane. One can recognise a PSI domain in the interval 29 to 75 (ICTTRGVNSCQQCLAVSPVCAWCSDETLSQGSPRCNLKENLLKDNCA). 19 cysteine pairs are disulfide-bonded: C30–C48, C38–C460, C41–C63, C51–C74, C202–C209, C257–C298, C399–C411, C431–C458, C462–C482, C473–C485, C487–C496, C498–C528, C511–C526, C520–C531, C533–C546, C548–C569, C553–C567, C561–C572, and C574–C583. The VWFA domain maps to 134–376 (DYPVDIYYLM…QLIVDAYGKI (243 aa)). Residues S146 and S148 each contribute to the Mg(2+) site. Residues S148, D151, D152, and D183 each coordinate Ca(2+). The interval 202–209 (CYNMKNAC) is CX3CL1-binding. Residues 202–209 (CYNMKNAC) are involved in CX3CL1-, NRG1-, FGF1- and IGF1-binding. Positions 240, 242, 244, 245, and 276 each coordinate Ca(2+). Position 245 (E245) interacts with Mg(2+). A CX3CL1-binding region spans residues 292–312 (LPNDGHCHIGTDNHYSASTTM). N-linked (GlcNAc...) asparagine glycosylation is found at N345 and N396. I-EGF domains follow at residues 462–497 (CQAF…SMCE), 498–547 (CSEE…KYCE), 548–584 (CDDF…YYCN), and 585–624 (CTTR…DTCE). An N-linked (GlcNAc...) asparagine glycan is attached at N477. N-linked (GlcNAc...) asparagine glycosylation is present at N584. Disulfide bonds link C585-C608, C592-C606, C600-C611, C613-C623, C626-C629, C633-C680, C639-C660, C642-C656, and C688-C712. A glycan (N-linked (GlcNAc...) asparagine) is linked at N679. The helical transmembrane segment at 718-740 (ILVVLLSVMGAILLIGLATLLIW) threads the bilayer. Over 741–787 (KLLITIHDRKEFAKFEEERARAKWDTANNPLYKEATSTFTNITYRGT) the chain is Cytoplasmic. At T766 the chain carries Phosphothreonine. At Y772 the chain carries Phosphotyrosine. The LIR motif lies at 776 to 782 (TSTFTNI). Position 778 is a phosphothreonine (T778). Y784 carries the phosphotyrosine modification.

It belongs to the integrin beta chain family. As to quaternary structure, heterodimer of an alpha and a beta subunit. Beta-3 (ITGB3) associates with either alpha-IIB (ITGA2B) or alpha-V (ITGAV). Interacts with FLNB and COMP. Interacts with PDIA6 following platelet stimulation. Interacts with SYK; upon activation by ITGB3 promotes platelet adhesion. Interacts with MYO10. Interacts with DAB2. Interacts with FERMT2. Integrin ITGAV:ITGB3 interacts with FBLN5 (via N-terminus). Interacts with EMP2; regulates the levels of the heterodimer ITGA5:ITGB3 integrin expression on the plasma membrane. ITGAV:ITGB3 interacts with CCN3. ITGAV:ITGB3 and ITGA2B:ITGB3 interact with SELP (via C-type lectin domain); the interaction mediates cell-cell interaction and adhesion. ITGAV:ITGB3 interacts with AGRA2. ITGAV:ITGB3 is found in a ternary complex with CX3CR1 and CX3CL1. ITGAV:ITGB3 is found in a ternary complex with NRG1 and ERBB3. ITGAV:ITGB3 is found in a ternary complex with FGF1 and FGFR1. ITGAV:ITGB3 interacts with FGF2; it is likely that FGF2 can simultaneously bind ITGAV:ITGB3 and FGF receptors. ITGAV:ITGB3 binds to IL1B. ITGAV:ITGB3 is found in a ternary complex with IGF1 and IGF1R. ITGAV:ITGB3 interacts with IGF2. ITGAV:ITGB3 interacts with FBN1. ITGAV:ITGB3 interacts with CD9, CD81 and CD151 (via second extracellular domain). Interacts (via the allosteric site (site 2)) with CXCL12 in a CXCR4-independent manner. Interacts with MXRA8/DICAM; the interaction inhibits ITGAV:ITGB3 heterodimer formation. ITGAV:ITGB3 interacts with PTN. Forms a complex with PTPRZ1 and PTN that stimulates endothelial cell migration through ITGB3 Tyr-772 phosphorylation. ITGAV:ITGB3 interacts with SLC6A4. Interacts with SLC6A4 (via C-terminus); this interaction regulates SLC6A4 trafficking. ITGA2B:ITGB3 interacts with PPIA/CYPA; the interaction is ROS and PPIase activity-dependent and is increased in the presence of thrombin. Interacts with tensin TNS3; TNS3 also interacts with PEAK1, thus acting as an adapter molecule to bridge the association of PEAK1 with ITGB3. Interacts with TM4SF19. In terms of processing, phosphorylated on tyrosine residues in response to thrombin-induced platelet aggregation. Probably involved in outside-in signaling.

The protein localises to the cell membrane. It localises to the cell projection. It is found in the lamellipodium membrane. Its subcellular location is the cell junction. The protein resides in the focal adhesion. The protein localises to the postsynaptic cell membrane. It localises to the synapse. Functionally, integrin alpha-V/beta-3 (ITGAV:ITGB3) is a receptor for cytotactin, fibronectin, laminin, matrix metalloproteinase-2, osteopontin, osteomodulin, prothrombin, thrombospondin, vitronectin and von Willebrand factor. Integrin alpha-IIB/beta-3 (ITGA2B:ITGB3) is a receptor for fibronectin, fibrinogen, plasminogen, prothrombin, thrombospondin and vitronectin. Integrins alpha-IIB/beta-3 and alpha-V/beta-3 recognize the sequence R-G-D in a wide array of ligands. Integrin alpha-IIB/beta-3 recognizes the sequence H-H-L-G-G-G-A-K-Q-A-G-D-V in fibrinogen gamma chain. Following activation integrin alpha-IIB/beta-3 brings about platelet/platelet interaction through binding of soluble fibrinogen. This step leads to rapid platelet aggregation which physically plugs ruptured endothelial surfaces. Fibrinogen binding enhances SELP expression in activated platelets. ITGAV:ITGB3 binds to fractalkine (CX3CL1) and acts as its coreceptor in CX3CR1-dependent fractalkine signaling. ITGAV:ITGB3 binds to NRG1 (via EGF domain) and this binding is essential for NRG1-ERBB signaling. ITGAV:ITGB3 binds to FGF1 and this binding is essential for FGF1 signaling. ITGAV:ITGB3 binds to FGF2 and this binding is essential for FGF2 signaling. ITGAV:ITGB3 binds to IGF1 and this binding is essential for IGF1 signaling. ITGAV:ITGB3 binds to IGF2 and this binding is essential for IGF2 signaling. ITGAV:ITGB3 binds to IL1B and this binding is essential for IL1B signaling. ITGAV:ITGB3 binds to PLA2G2A via a site (site 2) which is distinct from the classical ligand-binding site (site 1) and this induces integrin conformational changes and enhanced ligand binding to site 1. ITGAV:ITGB3 acts as a receptor for fibrillin-1 (FBN1) and mediates R-G-D-dependent cell adhesion to FBN1. ITGAV:ITGB3 binds to the Lilrb4a/Gp49b receptor and enhances the Lilrb4a-mediated inhibition of mast cell activation. ITGAV:ITGB3 also suppresses marginal zone B cell antibody production through its interaction with Lilrb4a. In brain, plays a role in synaptic transmission and plasticity. Involved in the regulation of the serotonin neurotransmission, is required to localize to specific compartments within the synapse the serotonin receptor SLC6A4 and for an appropriate reuptake of serotonin. Controls excitatory synaptic strength by regulating GRIA2-containing AMPAR endocytosis, which affects AMPAR abundance and composition. ITGAV:ITGB3 act as a receptor for CD40LG. ITGAV:ITGB3 acts as a receptor for IBSP and promotes cell adhesion and migration to IBSP. This Mus musculus (Mouse) protein is Integrin beta-3.